Reading from the N-terminus, the 519-residue chain is Halolysin (519 aa).

Positions 1–27 form a signal peptide, tat-type signal; sequence MAGTPNFDRRSFLRLAAAAGLTGMAGV. Residues 28–116 constitute a propeptide that is removed on maturation; the sequence is TSATPGRSPG…AEKNATHEAL (89 aa). One can recognise a Peptidase S8 domain in the interval 127-400; it reads QYAPQQVNAD…SGRVDAANAV (274 aa). Catalysis depends on charge relay system residues aspartate 154, histidine 193, and serine 347. The interval 386–425 is disordered; that stretch reads STKQGSGRVDAANAVTTDPGDGGGGGGGGSKETTYDGTLS. Residues 405–415 show a composition bias toward gly residues; it reads GDGGGGGGGGS.

Belongs to the peptidase S8 family. Predicted to be exported by the Tat system. The position of the signal peptide cleavage has not been experimentally proven.

The protein resides in the secreted. Probable secreted halophilic serine protease showing proteolytic activity toward the protease general substrate azocasein. This chain is Halolysin (hly), found in Haloferax mediterranei (strain ATCC 33500 / DSM 1411 / JCM 8866 / NBRC 14739 / NCIMB 2177 / R-4) (Halobacterium mediterranei).